The following is a 496-amino-acid chain: Ribose import ATP-binding protein RbsA (496 aa).

ABC transporter domains follow at residues 5 to 242 and 252 to 496; these read IEMK…VGRS and SQIG…TGGE. 37–44 is a binding site for ATP; sequence GENGAGKS.

This sequence belongs to the ABC transporter superfamily. Ribose importer (TC 3.A.1.2.1) family. As to quaternary structure, the complex is composed of an ATP-binding protein (RbsA), two transmembrane proteins (RbsC) and a solute-binding protein (RbsB).

It is found in the cell membrane. It catalyses the reaction D-ribose(out) + ATP + H2O = D-ribose(in) + ADP + phosphate + H(+). Functionally, part of the ABC transporter complex RbsABC involved in ribose import. Responsible for energy coupling to the transport system. This is Ribose import ATP-binding protein RbsA from Bacillus cereus (strain ATCC 14579 / DSM 31 / CCUG 7414 / JCM 2152 / NBRC 15305 / NCIMB 9373 / NCTC 2599 / NRRL B-3711).